The sequence spans 280 residues: Succinate dehydrogenase [ubiquinone] iron-sulfur subunit, mitochondrial (280 aa).

Residues 1–28 (MAAVVALSLRRRFPAAALGGARLQACRG) constitute a mitochondrion transit peptide. The 2Fe-2S ferredoxin-type domain maps to 40–133 (KKFAIYRWDP…VSKIYPLPHM (94 aa)). N6-acetyllysine occurs at positions 51 and 55. 4 residues coordinate [2Fe-2S] cluster: C93, C98, C101, and C113. Positions 146–218 (FYAQYKSIEP…PAVLMQAYRW (73 aa)) are interaction with SDHAF1. A 4Fe-4S ferredoxin-type domain is found at 176-206 (DREKLDGLYECILCACCSTSCPSYWWNGDKY). The [4Fe-4S] cluster site is built by C186, C189, and C192. Position 196 (C196) interacts with [3Fe-4S] cluster. W201 contributes to the a ubiquinone binding site. [3Fe-4S] cluster-binding residues include C243 and C249. C253 provides a ligand contact to [4Fe-4S] cluster.

It belongs to the succinate dehydrogenase/fumarate reductase iron-sulfur protein family. In terms of assembly, component of complex II composed of four subunits: the flavoprotein (FP) SDHA, iron-sulfur protein (IP) SDHB, and a cytochrome b560 composed of SDHC and SDHD. Interacts with SDHAF1; the interaction is required for iron-sulfur cluster incorporation into SDHB. Requires [2Fe-2S] cluster as cofactor. The cofactor is [3Fe-4S] cluster. It depends on [4Fe-4S] cluster as a cofactor.

The protein resides in the mitochondrion inner membrane. The catalysed reaction is a quinone + succinate = fumarate + a quinol. It carries out the reaction (R)-malate + a quinone = enol-oxaloacetate + a quinol. The enzyme catalyses (S)-malate + a quinone = enol-oxaloacetate + a quinol. It participates in carbohydrate metabolism; tricarboxylic acid cycle; fumarate from succinate (eukaryal route): step 1/1. Its activity is regulated as follows. Enol-oxaloacetate inhibits the succinate dehydrogenase activity. Its function is as follows. Iron-sulfur protein (IP) subunit of the succinate dehydrogenase complex (mitochondrial respiratory chain complex II), responsible for transferring electrons from succinate to ubiquinone (coenzyme Q). SDH also oxidizes malate to the non-canonical enol form of oxaloacetate, enol-oxaloacetate. Enol-oxaloacetate, which is a potent inhibitor of the succinate dehydrogenase activity, is further isomerized into keto-oxaloacetate. In Bos taurus (Bovine), this protein is Succinate dehydrogenase [ubiquinone] iron-sulfur subunit, mitochondrial (SDHB).